The primary structure comprises 475 residues: CAAX prenyl protease 1 homolog (475 aa).

Over 1–18 the chain is Lumenal; that stretch reads MGMWASLDALWEMPAEKR. A helical membrane pass occupies residues 19–39; that stretch reads IFGAVLLFSWTVYLWETFLAQ. The Nuclear portion of the chain corresponds to 40 to 81; it reads RQRRIYKTTTHVPPELGQIMDSETFEKSRLYQLDKSTFSFWS. Residues 82–102 traverse the membrane as a helical segment; the sequence is GLYSETEGTLILLFGGIPYLW. Residues 103-123 lie on the Lumenal side of the membrane; it reads RLSGRFCGYAGFGPEYEITQS. Residues 124–144 traverse the membrane as a helical segment; it reads LVFLLLATLFSALTGLPWSLY. Over 145–170 the chain is Nuclear; that stretch reads NTFVIEEKHGFNQQTLGFFMKDAIKK. Residues 171–191 form a helical membrane-spanning segment; it reads FVVTQCILLPVSSLLLYIIKI. Residues 192–195 lie on the Lumenal side of the membrane; sequence GGDY. Residues 196 to 216 traverse the membrane as a helical segment; sequence FFIYAWLFTLVVSLVLVTIYA. Topologically, residues 217–347 are nuclear; that stretch reads DYIAPLFDKF…GHWKLGHTVK (131 aa). Residue histidine 335 participates in Zn(2+) binding. Residue glutamate 336 is part of the active site. Histidine 339 is a binding site for Zn(2+). The chain crosses the membrane as a helical span at residues 348-368; it reads NIIISQMNSFLCFFLFAVLIG. Over 369 to 382 the chain is Lumenal; that stretch reads RKELFAAFGFYDSQ. The helical transmembrane segment at 383–405 threads the bilayer; that stretch reads PTLIGLLIIFQFIFSPYNEVLSF. The Nuclear portion of the chain corresponds to 406 to 475; sequence CLTVLSRRFE…LQALKTMKQH (70 aa). Residue glutamate 415 participates in Zn(2+) binding.

This sequence belongs to the peptidase M48A family. Zn(2+) serves as cofactor. Widely expressed. High levels in kidney, prostate, testis and ovary.

It localises to the endoplasmic reticulum membrane. Its subcellular location is the nucleus inner membrane. The protein resides in the early endosome membrane. The protein localises to the late endosome membrane. It carries out the reaction Hydrolyzes the peptide bond -P2-(S-farnesyl or geranylgeranyl)C-P1'-P2'-P3'-COOH where P1' and P2' are amino acids with aliphatic side chains and P3' is any C-terminal residue.. In terms of biological role, transmembrane metalloprotease whose catalytic activity is critical for processing lamin A/LMNA on the inner nuclear membrane and clearing clogged translocons on the endoplasmic reticulum. Proteolytically removes the C-terminal three residues of farnesylated proteins. Also plays an antiviral role independently of its protease activity by restricting enveloped RNA and DNA viruses, including influenza A, Zika, Ebola, Sindbis, vesicular stomatitis, cowpox, and vaccinia. Mechanistically, controls IFITM antiviral pathway to hinder viruses from breaching the endosomal barrier by modulating membrane fluidity. This Homo sapiens (Human) protein is CAAX prenyl protease 1 homolog.